Reading from the N-terminus, the 535-residue chain is Unconventional prefoldin RPB5 interactor 1 (535 aa).

Met1 carries the N-acetylmethionine modification. Disordered stretches follow at residues 1–23 (MEAP…PALV), 223–330 (LLGE…VGDN), 352–383 (KNTT…QELP), and 412–431 (SRSR…AAEF). Positions 7 to 18 (ETPPDPSPPSAP) are enriched in pro residues. Composition is skewed to polar residues over residues 253–265 (TNVN…TDSH) and 276–296 (EPFS…SSSY). Residues 299-320 (DDDDDDDDDDDDDNIDDDDGDN) show a composition bias toward acidic residues. At Ser372 the chain carries Phosphoserine; by RPS6KB1. Residue Thr373 is modified to Phosphothreonine. Residues 417 to 427 (NSVCSDTSESS) are compositionally biased toward polar residues. Ser442 is subject to Phosphoserine.

The protein belongs to the RNA polymerase II subunit 5-mediating protein family. Homodimer. Component of the PAQosome complex which is responsible for the biogenesis of several protein complexes and which consists of R2TP complex members RUVBL1, RUVBL2, RPAP3 and PIH1D1, URI complex members PFDN2, PFDN6, PDRG1, UXT and URI1 as well as ASDURF, POLR2E and DNAAF10/WDR92. Interacts with POLR2E/RPB5, RUVBL2 and RUVBL1. Interacts with PFDN2, PFDN4 and STAP1; the interactions are phosphorylation-dependent and occur in a growth-dependent manner in the mitochondrion. Interacts with UXT. Interacts with PPP1CC; the interaction is phosphorylation-dependent and occurs in a growth factor-dependent manner. Interacts (via the middle C-terminal region) with GTF2F1 and GTF2F2. Interacts with DMAP1. Interacts with TSC1 and TSC2. Interacts with PRPF8 and EFTUD2 in a ZNHIT2-dependent manner. Phosphorylated. Phosphorylation occurs essentially on serine residues. Phosphorylation occurs in response to androgen treatment in prostate cancer cells in a mTOR-dependent manner. Phosphorylated; hyperhosphorylated in mitochondria in a mTORC-dependent signaling pathway. Phosphorylated at Ser-372 by RPS6KB1 in a growth factor- and rapamycin-dependent manner. S6K1-mediated mitochondrial phosphorylation at Ser-372 disrupts the URI1-PPP1CC complex in the mitochondrion, relieves PPP1CC phosphatase inhibition activity and hence engages a negative feedback diminishing RPS6KB1 kinase activity, preventing sustained S6K1-dependent signaling. In terms of tissue distribution, ubiquitous. Expressed in ovarian cancers (at protein level). Expressed strongly in skeletal muscle. Expressed weakly in brain, heart, pancreas and in prostate epithelial cells.

It localises to the nucleus. The protein localises to the cytoplasm. The protein resides in the mitochondrion. Its subcellular location is the cell projection. It is found in the dendrite. Involved in gene transcription regulation. Acts as a transcriptional repressor in concert with the corepressor UXT to regulate androgen receptor (AR) transcription. May act as a tumor suppressor to repress AR-mediated gene transcription and to inhibit anchorage-independent growth in prostate cancer cells. Required for cell survival in ovarian cancer cells. Together with UXT, associates with chromatin to the NKX3-1 promoter region. Antagonizes transcriptional modulation via hepatitis B virus X protein. Its function is as follows. Plays a central role in maintaining S6K1 signaling and BAD phosphorylation under normal growth conditions thereby protecting cells from potential deleterious effects of sustained S6K1 signaling. The URI1-PPP1CC complex acts as a central component of a negative feedback mechanism that counteracts excessive S6K1 survival signaling to BAD in response to growth factors. Mediates inhibition of PPP1CC phosphatase activity in mitochondria. Coordinates the regulation of nutrient-sensitive gene expression availability in a mTOR-dependent manner. Seems to be a scaffolding protein able to assemble a prefoldin-like complex that contains PFDs and proteins with roles in transcription and ubiquitination. In Homo sapiens (Human), this protein is Unconventional prefoldin RPB5 interactor 1 (URI1).